The following is a 585-amino-acid chain: Arginine--tRNA ligase (585 aa).

The short motif at alanine 131–histidine 141 is the 'HIGH' region element.

This sequence belongs to the class-I aminoacyl-tRNA synthetase family. Monomer.

Its subcellular location is the cytoplasm. It catalyses the reaction tRNA(Arg) + L-arginine + ATP = L-arginyl-tRNA(Arg) + AMP + diphosphate. The chain is Arginine--tRNA ligase from Bartonella bacilliformis (strain ATCC 35685 / KC583 / Herrer 020/F12,63).